The sequence spans 450 residues: 23S rRNA (uracil(1939)-C(5))-methyltransferase RlmD (450 aa).

Positions 1 to 62 (MPVAGPLEIV…PSYEQATLVD (62 aa)) constitute a TRAM domain. Positions 75, 81, 84, and 163 each coordinate [4Fe-4S] cluster. 6 residues coordinate S-adenosyl-L-methionine: Gln271, Phe300, Asn305, Glu321, Asn349, and Asp370. Cys406 acts as the Nucleophile in catalysis.

This sequence belongs to the class I-like SAM-binding methyltransferase superfamily. RNA M5U methyltransferase family. RlmD subfamily.

The enzyme catalyses uridine(1939) in 23S rRNA + S-adenosyl-L-methionine = 5-methyluridine(1939) in 23S rRNA + S-adenosyl-L-homocysteine + H(+). Catalyzes the formation of 5-methyl-uridine at position 1939 (m5U1939) in 23S rRNA. The chain is 23S rRNA (uracil(1939)-C(5))-methyltransferase RlmD from Ralstonia nicotianae (strain ATCC BAA-1114 / GMI1000) (Ralstonia solanacearum).